We begin with the raw amino-acid sequence, 185 residues long: Elongation factor P 1 (185 aa).

The protein belongs to the elongation factor P family.

The protein localises to the cytoplasm. The protein operates within protein biosynthesis; polypeptide chain elongation. In terms of biological role, involved in peptide bond synthesis. Stimulates efficient translation and peptide-bond synthesis on native or reconstituted 70S ribosomes in vitro. Probably functions indirectly by altering the affinity of the ribosome for aminoacyl-tRNA, thus increasing their reactivity as acceptors for peptidyl transferase. The chain is Elongation factor P 1 (efp1) from Chlamydia muridarum (strain MoPn / Nigg).